The chain runs to 211 residues: Phosphoserine phosphatase 1 (211 aa).

His9 serves as the catalytic Tele-phosphohistidine intermediate. The active site involves His150.

The protein belongs to the histidine phosphatase superfamily. Metal-independent phosphoserine phosphatase family. In terms of assembly, homodimer. Can also form a heterodimer with PspB.

It carries out the reaction O-phospho-L-serine + H2O = L-serine + phosphate. The catalysed reaction is O-phospho-D-serine + H2O = D-serine + phosphate. The protein operates within amino-acid biosynthesis; L-serine biosynthesis; L-serine from 3-phospho-D-glycerate: step 3/3. With respect to regulation, activity is not inhibited by EDTA in vitro, nor enhanced by the addition of Mg(2+). Functionally, catalyzes the dephosphorylation of L-phosphoserine to serine and inorganic phosphate. Is poorly or not active toward D-phosphoserine, DL-phosphothreonine, 3-phosphoglycerate, para-nitrophenylphosphate, and fructose-6-phosphate. Does not display phosphoglycerate mutase activity. This Hydrogenobacter thermophilus (strain DSM 6534 / IAM 12695 / TK-6) protein is Phosphoserine phosphatase 1 (pspA).